The primary structure comprises 127 residues: Large ribosomal subunit protein uL24 (127 aa).

It belongs to the universal ribosomal protein uL24 family. As to quaternary structure, component of the large ribosomal subunit. Mature ribosomes consist of a small (40S) and a large (60S) subunit. The 40S subunit contains about 32 different proteins and 1 molecule of RNA (18S). The 60S subunit contains 45 different proteins and 3 molecules of RNA (25S, 5.8S and 5S).

It localises to the cytoplasm. In terms of biological role, component of the ribosome, a large ribonucleoprotein complex responsible for the synthesis of proteins in the cell. The small ribosomal subunit (SSU) binds messenger RNAs (mRNAs) and translates the encoded message by selecting cognate aminoacyl-transfer RNA (tRNA) molecules. The large subunit (LSU) contains the ribosomal catalytic site termed the peptidyl transferase center (PTC), which catalyzes the formation of peptide bonds, thereby polymerizing the amino acids delivered by tRNAs into a polypeptide chain. The nascent polypeptides leave the ribosome through a tunnel in the LSU and interact with protein factors that function in enzymatic processing, targeting, and the membrane insertion of nascent chains at the exit of the ribosomal tunnel. In Candida albicans (strain SC5314 / ATCC MYA-2876) (Yeast), this protein is Large ribosomal subunit protein uL24.